Consider the following 509-residue polypeptide: Glucose-1-phosphate adenylyltransferase large subunit 4, chloroplastic/amyloplastic (509 aa).

The N-terminal 36 residues, 1–36 (MATCSWAATTAAAAPPRPPARCRSRVAALRRTAAAS), are a transit peptide targeting the chloroplast.

This sequence belongs to the bacterial/plant glucose-1-phosphate adenylyltransferase family. In terms of assembly, heterotetramer composed of two small and two large subunits. Expressed in leaves and stems.

The protein resides in the plastid. Its subcellular location is the chloroplast. The enzyme catalyses alpha-D-glucose 1-phosphate + ATP + H(+) = ADP-alpha-D-glucose + diphosphate. The protein operates within glycan biosynthesis; starch biosynthesis. With respect to regulation, activated by 3'phosphoglycerate, inhibited by orthophosphate. Allosteric regulation. Functionally, involved in synthesis of starch. Catalyzes the synthesis of ADP-glucose, a molecule that serves as an activated glycosyl donor for alpha-1,4-glucan synthesis. Essential for starch synthesis in leaf chloroplasts. This chain is Glucose-1-phosphate adenylyltransferase large subunit 4, chloroplastic/amyloplastic, found in Oryza sativa subsp. japonica (Rice).